We begin with the raw amino-acid sequence, 215 residues long: MYEAGKRASFMGGAGIWILALSVLMHVVCSETQGNPESCNVPGPQGPPGMRGPPGTPGKPGPPGWNGFPGLPGPPGPPGMTVNCHSKGTSAFAVKANELPPAPSQPVIFKEALHDAQGHFDLATGVFTCPVPGLYQFGFHIEAVQRAVKVSLMRNGTQVMEREAEAQDGYEHISGTAILQLGMEDRVWLENKLSQTDLERGTVQAVFSGFLIHEN.

The signal sequence occupies residues 1–30; that stretch reads MYEAGKRASFMGGAGIWILALSVLMHVVCS. Positions 34-79 are disordered; sequence GNPESCNVPGPQGPPGMRGPPGTPGKPGPPGWNGFPGLPGPPGPPG. Residues 43–81 form the Collagen-like domain; the sequence is GPQGPPGMRGPPGTPGKPGPPGWNGFPGLPGPPGPPGMT. Over residues 44–63 the composition is skewed to pro residues; sequence PQGPPGMRGPPGTPGKPGPP. In terms of domain architecture, C1q spans 85–215; sequence HSKGTSAFAV…VFSGFLIHEN (131 aa). Asn-155 carries an N-linked (GlcNAc...) asparagine glycan.

As to expression, plasma; synthesized in the liver.

The protein localises to the secreted. Its function is as follows. Plasma proteins HP-20, HP-25, HP-27 and HP-55 form a 140 kDa complex via disulfide bonds in the plasma and are hibernation specific. The sequence is that of Hibernation-associated plasma protein HP-27 from Tamias sibiricus (Siberian chipmunk).